The chain runs to 157 residues: Class 10 plant pathogenesis-related protein 2F (157 aa).

D8 lines the trans-zeatin pocket. Residues P32, V35, and I38 each contribute to the Ca(2+) site. Residues E60, H69, Y81, and Y83 each contribute to the trans-zeatin site.

This sequence belongs to the BetVI family.

Its subcellular location is the cytoplasm. It localises to the cytosol. Class II ribonuclease (RNase). Binds to cytokinins. Interacts with melatonin. The chain is Class 10 plant pathogenesis-related protein 2F from Lupinus luteus (European yellow lupine).